The following is a 203-amino-acid chain: Urease accessory protein UreG (203 aa).

14–21 is a GTP binding site; the sequence is GPVGSGKT.

Belongs to the SIMIBI class G3E GTPase family. UreG subfamily. Homodimer. UreD, UreF and UreG form a complex that acts as a GTP-hydrolysis-dependent molecular chaperone, activating the urease apoprotein by helping to assemble the nickel containing metallocenter of UreC. The UreE protein probably delivers the nickel.

It is found in the cytoplasm. Its function is as follows. Facilitates the functional incorporation of the urease nickel metallocenter. This process requires GTP hydrolysis, probably effectuated by UreG. The sequence is that of Urease accessory protein UreG from Rhizobium etli (strain ATCC 51251 / DSM 11541 / JCM 21823 / NBRC 15573 / CFN 42).